The following is a 227-amino-acid chain: MRLTYFGHSAFLLELARTRLLFDPYLRENPHGSVDPKSVPCDLVFCSHAHSDHVGDALELARLHHAKIVAPYELAEHFAAQGAETIDLMPGGGVTLPWGRIDMTPAIHGSALELGDGKTLSMGPPSGFVVRADGQSLYHAGDTALFGDMRLIGRHGIDVALLPIGDFYTMGPADAVEALHLLRPRLAIPMHFNSNPKIRVDPHRFAAEARRTGHPVRVMSPGETIEV.

It belongs to the UPF0173 family.

The polypeptide is UPF0173 metal-dependent hydrolase Oter_4201 (Opitutus terrae (strain DSM 11246 / JCM 15787 / PB90-1)).